We begin with the raw amino-acid sequence, 368 residues long: DNA replication and repair protein RecF (368 aa).

Position 30-37 (30-37 (GNNAQGKT)) interacts with ATP.

The protein belongs to the RecF family.

The protein localises to the cytoplasm. In terms of biological role, the RecF protein is involved in DNA metabolism; it is required for DNA replication and normal SOS inducibility. RecF binds preferentially to single-stranded, linear DNA. It also seems to bind ATP. This is DNA replication and repair protein RecF from Streptococcus pyogenes serotype M4 (strain MGAS10750).